Here is a 701-residue protein sequence, read N- to C-terminus: MYSEETQRKLIEKTREFLNLDIKSIDRKKAESIIEDLREVIRFHDWRYYVLAQPVISDYEYDKLFKLLKDIESKYPDLITPDSPTQRVPSEITKVFPQVKHLTPMLSLDNSYNEADLRDFDRRVRELTGLEKIEYAVEPKFDGAGISLIYEKDLFKRGATRGDGEVGEDITNNLKVIKSIPLSAKFSSYGIDKVEIRGEVLIRKDIFKRINEQRLEEGLPLFANPRNAAAGSIRLQDPKEVAKRGLEAFVYQITYAEKDGKNLLGTVLKKHSDNIKMLHLLGFKTPYEVLKVCNGIDEVIDYCREWERKRDNYPYEIDGMVIKVNDISLYEKLGFTSHHPRWAIAYKFKARQATTKIIDVVFQVGRTGAITPVAKLQPVEIGGVIVSSVSLFNEDFIREKDIRIGDTVLVERAGDVIPYVVMVIKEARTGNEKPIEFPKNCPSCGSPLVKPLGEAVYRCININCPAQVIERIIHFASKDAMDIKGLSEATVKKFYKLGLLKSIPDIYRLDFRIIKNIQGFGEKSVNNLKQAIEESKNRPLYRLIYGLGIRYVGEVTAKTLASAVNCLEDLKNFTITDLMKLPDIGDKVATEIYNFFHNEQNLKMIQQLKELGVNVCNPKEEKRGKLAGLNFVFTGALKCCSREKAKEIVESLGGNVLDTVSKKVHYLVVGEEPGSKLQKAQKIPTIKIINEEEFLKMIGQQ.

NAD(+) is bound by residues 58-62 (DYEYD), 107-108 (SL), and E138. K140 (N6-AMP-lysine intermediate) is an active-site residue. NAD(+) is bound by residues R161, E199, K323, and K347. The Zn(2+) site is built by C441, C444, C459, and C464. A BRCT domain is found at 621–701 (EKRGKLAGLN…EEFLKMIGQQ (81 aa)).

The protein belongs to the NAD-dependent DNA ligase family. LigA subfamily. Requires Mg(2+) as cofactor. It depends on Mn(2+) as a cofactor.

It catalyses the reaction NAD(+) + (deoxyribonucleotide)n-3'-hydroxyl + 5'-phospho-(deoxyribonucleotide)m = (deoxyribonucleotide)n+m + AMP + beta-nicotinamide D-nucleotide.. In terms of biological role, DNA ligase that catalyzes the formation of phosphodiester linkages between 5'-phosphoryl and 3'-hydroxyl groups in double-stranded DNA using NAD as a coenzyme and as the energy source for the reaction. It is essential for DNA replication and repair of damaged DNA. The sequence is that of DNA ligase from Sulfurihydrogenibium azorense (strain DSM 15241 / OCM 825 / Az-Fu1).